An 87-amino-acid chain; its full sequence is MANIKSAKKRIKVIETKTLRNKVIKSKVKTLVKKVEVAVAASDKDLATKSLKDAVVAIDKAASKGVYHKKNAARKVGRLAKAVNSIA.

This sequence belongs to the bacterial ribosomal protein bS20 family.

Its function is as follows. Binds directly to 16S ribosomal RNA. This Lachnoclostridium phytofermentans (strain ATCC 700394 / DSM 18823 / ISDg) (Clostridium phytofermentans) protein is Small ribosomal subunit protein bS20.